The following is a 274-amino-acid chain: Phosphatidylglycerol--prolipoprotein diacylglyceryl transferase (274 aa).

Helical transmembrane passes span 16–36 (VGLH…LSSF), 62–82 (FALG…VLFY), 94–114 (IIKI…LVIW), and 129–149 (LSVT…ALLI). Arginine 150 provides a ligand contact to a 1,2-diacyl-sn-glycero-3-phospho-(1'-sn-glycerol). 3 consecutive transmembrane segments (helical) span residues 184-204 (VQLY…WLCY), 213-233 (GYSA…AEFF), and 247-267 (LTIG…ILWI).

This sequence belongs to the Lgt family.

The protein localises to the cell inner membrane. The enzyme catalyses L-cysteinyl-[prolipoprotein] + a 1,2-diacyl-sn-glycero-3-phospho-(1'-sn-glycerol) = an S-1,2-diacyl-sn-glyceryl-L-cysteinyl-[prolipoprotein] + sn-glycerol 1-phosphate + H(+). It functions in the pathway protein modification; lipoprotein biosynthesis (diacylglyceryl transfer). Functionally, catalyzes the transfer of the diacylglyceryl group from phosphatidylglycerol to the sulfhydryl group of the N-terminal cysteine of a prolipoprotein, the first step in the formation of mature lipoproteins. The chain is Phosphatidylglycerol--prolipoprotein diacylglyceryl transferase from Chlamydia muridarum (strain MoPn / Nigg).